The primary structure comprises 128 residues: Protein C10 (128 aa).

This sequence belongs to the UPF0456 family.

It localises to the cytoplasm. The sequence is that of Protein C10 from Xenopus laevis (African clawed frog).